We begin with the raw amino-acid sequence, 491 residues long: MQNWIDNSFQAEFEQESYFGSLGENSTNPSSGGDRYPEALIIRDITGKTSAIYFDITDDILENDPHQTILLSPIENDIWTEKDVIIDTYRYINELIFCDEKSQQKQKDRTEFIKKEQLQLISNRNPDHYRNLWNQCENCFIPNYKKVLKSNMQICEECGSYFKMTSSDRIDLLIDEGTWNPLDQDMVSLDSSEFDSEAELECYEDNIKEWNEEMCQAFMRKLSKDLKEGQALERTANLIEEPWLPEYIQPEEKVEEWTKPDLDEGEESQDEERWIWELDKGEESQEIEDSEANDEDDDDAPYVERLAFYKKETGLLDAVQTGVGQLNGRPVALGVMDFRFLAGSMGCVVGEKITRLIEYATNNLLPLIILSASGGARVHEGSLSLMQMAKISAALYDYQSNKRLFYISILTSPTTGGVTASFAMLGDIIITEPGTFVAFAGPRVVQQILNETIPEEEQEAEALFEKGFFDLIVPRHLLKNVISELLNLHAL.

Residues 132 to 491 enclose the CoA carboxyltransferase N-terminal domain; that stretch reads LWNQCENCFI…ISELLNLHAL (360 aa). C136, C139, C155, and C158 together coordinate Zn(2+). A C4-type zinc finger spans residues 136–158; it reads CENCFIPNYKKVLKSNMQICEEC. Over residues 252 to 262 the composition is skewed to basic and acidic residues; the sequence is EKVEEWTKPDL. Disordered stretches follow at residues 252-273 and 279-298; these read EKVE…DEER and DKGE…EDDD. Over residues 284 to 298 the composition is skewed to acidic residues; the sequence is SQEIEDSEANDEDDD.

The protein belongs to the AccD/PCCB family. In terms of assembly, acetyl-CoA carboxylase is a heterohexamer composed of biotin carboxyl carrier protein, biotin carboxylase and 2 subunits each of ACCase subunit alpha and ACCase plastid-coded subunit beta (accD). Zn(2+) is required as a cofactor.

It is found in the plastid. It catalyses the reaction N(6)-carboxybiotinyl-L-lysyl-[protein] + acetyl-CoA = N(6)-biotinyl-L-lysyl-[protein] + malonyl-CoA. It participates in lipid metabolism; malonyl-CoA biosynthesis; malonyl-CoA from acetyl-CoA: step 1/1. Functionally, component of the acetyl coenzyme A carboxylase (ACC) complex. Biotin carboxylase (BC) catalyzes the carboxylation of biotin on its carrier protein (BCCP) and then the CO(2) group is transferred by the transcarboxylase to acetyl-CoA to form malonyl-CoA. This chain is Acetyl-coenzyme A carboxylase carboxyl transferase subunit beta, found in Cuscuta gronovii (Common dodder).